Reading from the N-terminus, the 705-residue chain is Solute carrier family 28 member 3 (705 aa).

Residues 1 to 21 (MSRSDPDPGKNSEPSKSKMSL) show a composition bias toward basic and acidic residues. A disordered region spans residues 1–96 (MSRSDPDPGK…TEEESEDERQ (96 aa)). The Cytoplasmic portion of the chain corresponds to 1–119 (MSRSDPDPGK…FCRKHRVILQ (119 aa)). Positions 48 to 63 (APGNSTVRSRVVQSGE) are enriched in polar residues. A compositionally biased stretch (basic and acidic residues) spans 65-74 (GRAKQDDRQI). Residues 120 to 140 (HTIWAVLLTGFLALVIAACAL) traverse the membrane as a helical segment. Residues 141-145 (NFHRA) are Extracellular-facing. A helical membrane pass occupies residues 146 to 166 (LPLFVITLVTIFFVVWDRLMA). Residues 167-190 (KYEQRIDDVLSPGKRLLERHWFWL) lie on the Cytoplasmic side of the membrane. Residues 191 to 211 (KWVVWCSLILAVILWLALDTA) form a helical membrane-spanning segment. The Extracellular segment spans residues 212-214 (RLG). Residues 215-236 (QQQLISFGGLVMYIVLLFLFSK) form a helical membrane-spanning segment. Residues 237-244 (HPTRVYWR) lie on the Cytoplasmic side of the membrane. Residues 245 to 264 (PVFWGIGLQFLLGLLILRTR) traverse the membrane as a helical segment. The Extracellular segment spans residues 265–301 (PGFVAFDWMGKQVQTFLGYTDAGAQFVFGEKYTDHFF). Residues 302–322 (AFKILPIVVFFSTVMSMLYYL) traverse the membrane as a helical segment. Topologically, residues 323–346 (GLMQWIIRKVGWLMLVTMGSSPIE) are cytoplasmic. Residues 347–365 (SVVAAGNIFVGQTESPLLV) constitute an intramembrane region (helical). At 366 to 378 (QPYLPHVTKSELH) the chain is on the cytoplasmic side. A helical membrane pass occupies residues 379 to 401 (TIMTAGFATIAGSVLGAYISFGV). Residues 402 to 403 (SS) lie on the Extracellular side of the membrane. The chain crosses the membrane as a helical span at residues 404 to 425 (THLLTASVMSAPAALAVAKLFW). Over 426 to 460 (PETEKPKITLKNAMKMENGDSRNLLEAATQGASSS) the chain is Cytoplasmic. Residues 461 to 486 (IPLVANIAANLIAFLALLSFVNSALS) traverse the membrane as a helical segment. Over 487 to 524 (WFGSMFDYPQLSFELICSYIFMPFSFMMGVDWQDRFMV) the chain is Extracellular. Residues 525-544 (AKLIGYKTFFNEFVAYEHLS) constitute an intramembrane region (helical). At 545-583 (KFINLRKAAGPKFVNGVQQYMSIRSETIATYALCGFANF) the chain is on the extracellular side. A helical membrane pass occupies residues 584–594 (GSLGIVIGGLT). Residues 595-607 (SIAPSRKRDIASG) are Cytoplasmic-facing. Residues 608-630 (AMRALIAGTIACFMTACIAGMLS) traverse the membrane as a helical segment. Residues 631–705 (DTPVAINCHH…LNCGWIPNIP (75 aa)) are Extracellular-facing.

This sequence belongs to the concentrative nucleoside transporter (CNT) (TC 2.A.41) family. Homotrimer. Expressed in kidney; in the proximal tubule, glomerulus and cortical collecting duct.

It localises to the cell membrane. It catalyses the reaction thymidine(out) + 2 Na(+)(out) = thymidine(in) + 2 Na(+)(in). The catalysed reaction is cytidine(out) + 2 Na(+)(out) = cytidine(in) + 2 Na(+)(in). It carries out the reaction uridine(out) + 2 Na(+)(out) = uridine(in) + 2 Na(+)(in). The enzyme catalyses adenosine(out) + 2 Na(+)(out) = adenosine(in) + 2 Na(+)(in). It catalyses the reaction guanosine(out) + 2 Na(+)(out) = guanosine(in) + 2 Na(+)(in). The catalysed reaction is inosine(out) + 2 Na(+)(out) = inosine(in) + 2 Na(+)(in). In terms of biological role, sodium-dependent, pyrimidine- and purine-selective. Involved in the homeostasis of endogenous nucleosides. Exhibits the transport characteristics of the nucleoside transport system cib or N3 subtype (N3/cib) (with marked transport of both thymidine and inosine). Employs a 2:1 sodium/nucleoside ratio. Also able to transport gemcitabine, 3'-azido-3'-deoxythymidine (AZT), ribavirin and 3-deazauridine. The sequence is that of Solute carrier family 28 member 3 (Slc28a3) from Rattus norvegicus (Rat).